Consider the following 80-residue polypeptide: Protein P9 (80 aa).

Self-associates.

The chain is Protein P9 from Beta vulgaris (Sugar beet).